A 591-amino-acid polypeptide reads, in one-letter code: L-fucose isomerase (591 aa).

Catalysis depends on proton acceptor residues E337 and D361. Mn(2+)-binding residues include E337, D361, and H528.

Belongs to the L-fucose isomerase family. Homohexamer. Requires Mn(2+) as cofactor.

It localises to the cytoplasm. The catalysed reaction is L-fucose = L-fuculose. It functions in the pathway carbohydrate degradation; L-fucose degradation; L-lactaldehyde and glycerone phosphate from L-fucose: step 1/3. Converts the aldose L-fucose into the corresponding ketose L-fuculose. In Klebsiella pneumoniae subsp. pneumoniae (strain ATCC 700721 / MGH 78578), this protein is L-fucose isomerase.